The primary structure comprises 113 residues: Holo-[acyl-carrier-protein] synthase (113 aa).

Positions 8 and 57 each coordinate Mg(2+).

Belongs to the P-Pant transferase superfamily. AcpS family. It depends on Mg(2+) as a cofactor.

The protein resides in the cytoplasm. It catalyses the reaction apo-[ACP] + CoA = holo-[ACP] + adenosine 3',5'-bisphosphate + H(+). In terms of biological role, transfers the 4'-phosphopantetheine moiety from coenzyme A to a Ser of acyl-carrier-protein. The polypeptide is Holo-[acyl-carrier-protein] synthase (Thermodesulfovibrio yellowstonii (strain ATCC 51303 / DSM 11347 / YP87)).